Here is a 334-residue protein sequence, read N- to C-terminus: GTP 3',8-cyclase (334 aa).

Residues 11–236 form the Radical SAM core domain; sequence GFNRKIDYLR…ESTESSQGPA (226 aa). GTP is bound at residue R20. [4Fe-4S] cluster contacts are provided by C27 and C31. Residue Y33 coordinates S-adenosyl-L-methionine. C34 provides a ligand contact to [4Fe-4S] cluster. R69 contacts GTP. Residue G73 participates in S-adenosyl-L-methionine binding. Residue T100 coordinates GTP. S124 is an S-adenosyl-L-methionine binding site. Residue K161 coordinates GTP. S-adenosyl-L-methionine is bound at residue M195. [4Fe-4S] cluster-binding residues include C260 and C263. 265–267 serves as a coordination point for GTP; sequence RVR. [4Fe-4S] cluster is bound at residue C277.

The protein belongs to the radical SAM superfamily. MoaA family. Monomer and homodimer. The cofactor is [4Fe-4S] cluster.

It catalyses the reaction GTP + AH2 + S-adenosyl-L-methionine = (8S)-3',8-cyclo-7,8-dihydroguanosine 5'-triphosphate + 5'-deoxyadenosine + L-methionine + A + H(+). It functions in the pathway cofactor biosynthesis; molybdopterin biosynthesis. Its function is as follows. Catalyzes the cyclization of GTP to (8S)-3',8-cyclo-7,8-dihydroguanosine 5'-triphosphate. The polypeptide is GTP 3',8-cyclase (Pseudomonas putida (strain GB-1)).